The sequence spans 312 residues: MQSYKYDKAIVPESKNGGSPALNNNPRKGGSKRVLLICLDLFCLFMAALPFLIIETSTIKPYRRGFYCNDESIKYPLKVSETINDAVLCAVGIVIAILRIITGEFYRIYYLKEKSRSTIQNPYVAALYKQVGCFLFGCAISQSFTDIAKVSIGRLRPHFLSVCDPDFSQINCSEGYIQNYRCRGEDSKVQEARKSFFSGHASFSMFTMLYLVLYLQARFTWRGARLLRPLLQFTLLMMAFYTGLSRVSDYKHHPSDVLAGFAQGALVACCIVFFVSDLFKTKTTLSLPAPAIRREILSPVDIMDRSNHHNMV.

At 1–33 the chain is on the cytoplasmic side; that stretch reads MQSYKYDKAIVPESKNGGSPALNNNPRKGGSKR. Ser19 carries the post-translational modification Phosphoserine. Residues 34–54 traverse the membrane as a helical segment; the sequence is VLLICLDLFCLFMAALPFLII. Residues 55–85 lie on the Extracellular side of the membrane; that stretch reads ETSTIKPYRRGFYCNDESIKYPLKVSETIND. A helical transmembrane segment spans residues 86–106; sequence AVLCAVGIVIAILRIITGEFY. The Cytoplasmic segment spans residues 107-123; it reads RIYYLKEKSRSTIQNPY. A Dityrosine basolateral targeting motif motif is present at residues 109–110; sequence YY. A helical transmembrane segment spans residues 124–144; that stretch reads VAALYKQVGCFLFGCAISQSF. The Extracellular segment spans residues 145-194; the sequence is TDIAKVSIGRLRPHFLSVCDPDFSQINCSEGYIQNYRCRGEDSKVQEARK. Residues 149–157 are phosphatase sequence motif I; the sequence is KVSIGRLRP. An N-linked (GlcNAc...) asparagine glycan is attached at Asn171. The short motif at 183 to 185 is the Integrin-binding motif element; it reads RGE. The chain crosses the membrane as a helical span at residues 195–215; that stretch reads SFFSGHASFSMFTMLYLVLYL. Residues 197–200 form a phosphatase sequence motif II region; that stretch reads FSGH. His200 serves as the catalytic Proton donors. The Cytoplasmic portion of the chain corresponds to 216–226; it reads QARFTWRGARL. Residues 227 to 244 form a helical membrane-spanning segment; it reads LRPLLQFTLLMMAFYTGL. The tract at residues 245-256 is phosphatase sequence motif III; that stretch reads SRVSDYKHHPSD. Topologically, residues 245 to 258 are extracellular; that stretch reads SRVSDYKHHPSDVL. The Nucleophile role is filled by His252. The chain crosses the membrane as a helical span at residues 259–279; the sequence is AGFAQGALVACCIVFFVSDLF. A mediates interaction with CTNND1 region spans residues 276–312; the sequence is SDLFKTKTTLSLPAPAIRREILSPVDIMDRSNHHNMV. Residues 280–312 are Cytoplasmic-facing; the sequence is KTKTTLSLPAPAIRREILSPVDIMDRSNHHNMV.

It belongs to the PA-phosphatase related phosphoesterase family. Forms functional homodimers and homooligomers that are not required for substrate recognition and catalytic activity. Can also form heterooligomers with other PLPP2 and PLPP3. Interacts with CTNND1; negatively regulates the PLPP3-mediated stabilization of beta-catenin/CTNNB1. In terms of processing, N-glycosylated. Contains high-mannose oligosaccharides. In terms of tissue distribution, detected in epithelial cells of intestinal mucosa, lung, liver and brain.

It is found in the cell membrane. The protein localises to the basolateral cell membrane. Its subcellular location is the endoplasmic reticulum membrane. It localises to the endoplasmic reticulum-Golgi intermediate compartment membrane. The protein resides in the golgi apparatus membrane. It is found in the golgi apparatus. The protein localises to the trans-Golgi network membrane. Its subcellular location is the membrane raft. The catalysed reaction is a 1,2-diacyl-sn-glycero-3-phosphate + H2O = a 1,2-diacyl-sn-glycerol + phosphate. The enzyme catalyses 1,2-dihexadecanoyl-sn-glycero-3-phosphate + H2O = 1,2-dihexadecanoyl-sn-glycerol + phosphate. It catalyses the reaction 1,2-di-(9Z-octadecenoyl)-sn-glycero-3-phosphate + H2O = 1,2-di-(9Z-octadecenoyl)-sn-glycerol + phosphate. It carries out the reaction a monoacyl-sn-glycero-3-phosphate + H2O = a monoacylglycerol + phosphate. The catalysed reaction is (9Z)-octadecenoyl-sn-glycero-3-phosphate + H2O = (9Z-octadecenoyl)-glycerol + phosphate. The enzyme catalyses sphing-4-enine 1-phosphate + H2O = sphing-4-enine + phosphate. It catalyses the reaction an N-acylsphing-4-enine 1-phosphate + H2O = an N-acylsphing-4-enine + phosphate. It carries out the reaction N-(octanoyl)-sphing-4-enine-1-phosphate + H2O = N-octanoylsphing-4-enine + phosphate. The catalysed reaction is N-(9Z-octadecenoyl)-ethanolamine phosphate + H2O = N-(9Z-octadecenoyl) ethanolamine + phosphate. Its pathway is lipid metabolism; phospholipid metabolism. With respect to regulation, magnesium-independent phospholipid phosphatase. Insensitive to N-ethylmaleimide. Inhibited by sphingosine, zinc ions and modestly by propanolol. Its function is as follows. Magnesium-independent phospholipid phosphatase of the plasma membrane that catalyzes the dephosphorylation of a variety of glycerolipid and sphingolipid phosphate esters including phosphatidate/PA, lysophosphatidate/LPA, diacylglycerol pyrophosphate/DGPP, sphingosine 1-phosphate/S1P and ceramide 1-phosphate/C1P. Also acts on N-oleoyl ethanolamine phosphate/N-(9Z-octadecenoyl)-ethanolamine phosphate, a potential physiological compound. Has both an extracellular and an intracellular phosphatase activity, allowing the hydrolysis and the cellular uptake of these bioactive lipid mediators from the milieu, regulating signal transduction in different cellular processes. Through the dephosphorylation of extracellular sphingosine-1-phosphate and the regulation of its extra- and intracellular availability, plays a role in vascular homeostasis, regulating endothelial cell migration, adhesion, survival, proliferation and the production of pro-inflammatory cytokines. By maintaining the appropriate levels of this lipid in the cerebellum, also ensure its proper development and function. Through its intracellular lipid phosphatase activity may act in early compartments of the secretory pathway, regulating the formation of Golgi to endoplasmic reticulum retrograde transport carriers. Independently of this phosphatase activity may also function in the Wnt signaling pathway and the stabilization of beta-catenin/CTNNB1, thereby regulating cell proliferation, migration and differentiation in angiogenesis or yet in tumor growth. Also plays a role in integrin-mediated cell-cell adhesion in angiogenesis. The chain is Phospholipid phosphatase 3 from Rattus norvegicus (Rat).